A 281-amino-acid chain; its full sequence is MHVKRAATAGFCMGVGLALKKLDRELDNNAKDIATLGPIIHNPQVLRRYEQKGVRCYTDPAEARSGQRVVIRAHGIPEETESALAAAGVDLVDATCPKVKRAQLGIARQREKGRTLLLFGEHDHPEVQGLLSYAGEGAVVFGSLEELQNGPLEDDRHYFLAAQTTQDKHAFTSVIEWVRRRFGDHVPVLDTICDATRERQDEAIAIARSVDVMVVVGGFASGNTRRLAEVAQAQGVPTYHVETPDQLPLDAIRGYGAAGLTAGASTPKSIIDETQKLLESL.

Cys12 lines the [4Fe-4S] cluster pocket. (2E)-4-hydroxy-3-methylbut-2-enyl diphosphate-binding residues include His41 and His74. Dimethylallyl diphosphate is bound by residues His41 and His74. Residues His41 and His74 each coordinate isopentenyl diphosphate. Cys96 contributes to the [4Fe-4S] cluster binding site. Residue His124 participates in (2E)-4-hydroxy-3-methylbut-2-enyl diphosphate binding. A dimethylallyl diphosphate-binding site is contributed by His124. His124 lines the isopentenyl diphosphate pocket. Glu126 functions as the Proton donor in the catalytic mechanism. Thr164 lines the (2E)-4-hydroxy-3-methylbut-2-enyl diphosphate pocket. Cys193 contacts [4Fe-4S] cluster. Ser221, Asn223, and Ser265 together coordinate (2E)-4-hydroxy-3-methylbut-2-enyl diphosphate. Residues Ser221, Asn223, and Ser265 each contribute to the dimethylallyl diphosphate site. Positions 221, 223, and 265 each coordinate isopentenyl diphosphate.

It belongs to the IspH family. [4Fe-4S] cluster is required as a cofactor.

It catalyses the reaction isopentenyl diphosphate + 2 oxidized [2Fe-2S]-[ferredoxin] + H2O = (2E)-4-hydroxy-3-methylbut-2-enyl diphosphate + 2 reduced [2Fe-2S]-[ferredoxin] + 2 H(+). It carries out the reaction dimethylallyl diphosphate + 2 oxidized [2Fe-2S]-[ferredoxin] + H2O = (2E)-4-hydroxy-3-methylbut-2-enyl diphosphate + 2 reduced [2Fe-2S]-[ferredoxin] + 2 H(+). Its pathway is isoprenoid biosynthesis; dimethylallyl diphosphate biosynthesis; dimethylallyl diphosphate from (2E)-4-hydroxy-3-methylbutenyl diphosphate: step 1/1. It functions in the pathway isoprenoid biosynthesis; isopentenyl diphosphate biosynthesis via DXP pathway; isopentenyl diphosphate from 1-deoxy-D-xylulose 5-phosphate: step 6/6. In terms of biological role, catalyzes the conversion of 1-hydroxy-2-methyl-2-(E)-butenyl 4-diphosphate (HMBPP) into a mixture of isopentenyl diphosphate (IPP) and dimethylallyl diphosphate (DMAPP). Acts in the terminal step of the DOXP/MEP pathway for isoprenoid precursor biosynthesis. The chain is 4-hydroxy-3-methylbut-2-enyl diphosphate reductase from Oleidesulfovibrio alaskensis (strain ATCC BAA-1058 / DSM 17464 / G20) (Desulfovibrio alaskensis).